The chain runs to 474 residues: 3-isopropylmalate dehydratase large subunit (474 aa).

Positions 355, 415, and 418 each coordinate [4Fe-4S] cluster.

The protein belongs to the aconitase/IPM isomerase family. LeuC type 1 subfamily. In terms of assembly, heterodimer of LeuC and LeuD. [4Fe-4S] cluster serves as cofactor.

It catalyses the reaction (2R,3S)-3-isopropylmalate = (2S)-2-isopropylmalate. The protein operates within amino-acid biosynthesis; L-leucine biosynthesis; L-leucine from 3-methyl-2-oxobutanoate: step 2/4. Its function is as follows. Catalyzes the isomerization between 2-isopropylmalate and 3-isopropylmalate, via the formation of 2-isopropylmaleate. The polypeptide is 3-isopropylmalate dehydratase large subunit (Shewanella sp. (strain MR-7)).